Reading from the N-terminus, the 1210-residue chain is Disease resistance-like protein DSC2 (1210 aa).

Positions 59-223 (WTHQVFPSFR…KVAKDVSDVL (165 aa)) constitute a TIR domain. The active site involves E134. Positions 241–511 (ITRINSLLCL…CLFNGCQVNH (271 aa)) constitute an NB-ARC domain. 9 LRR repeats span residues 662-685 (AKFL…IQPL), 686-709 (KNLK…SNAT), 711-732 (LESL…IRGT), 756-780 (ATSL…LPGD), 783-804 (MRSL…PEIS), 805-828 (TNIQ…RLWS), 830-848 (LDKL…PPVP), 849-873 (DGIS…NLSQ), and 940-970 (LPEL…NLSQ).

It belongs to the disease resistance NB-LRR family. As to quaternary structure, interacts with DSC1.

It catalyses the reaction NAD(+) + H2O = ADP-D-ribose + nicotinamide + H(+). Functionally, TIR-NB-LRR receptor-like protein involved in plant defense. Acts as a trigger of hypersensitive response (HR). Functions as a guard of CAMTA3, a negative regulator of immunity, during pathogen infection. The protein is Disease resistance-like protein DSC2 of Arabidopsis thaliana (Mouse-ear cress).